Here is a 1010-residue protein sequence, read N- to C-terminus: Eukaryotic translation initiation factor 4E transporter (1010 aa).

The YXXXXLphi motif motif lies at 10-16; sequence YSKVDLL. Disordered regions lie at residues 154-182, 196-277, 289-320, 354-391, and 921-960; these read GSNSEESNEGINTCASKGKAASSPSRKGS, PDHD…RLVE, YDSKKSFDRQGINNRRISGKEPFSTQSRSKRG, NEERSVTEDKNNQIQQLDKNLDAQASKDEASMRNSNDS, and QSNPQMSPPVPGFSDSSDSGNVIKANSLTSPSYQRDERIS. The span at 201 to 211 shows a compositional bias: polar residues; that stretch reads CMSSSPTFSTS. Over residues 227–247 the composition is skewed to basic and acidic residues; that stretch reads DNWDYKNEKTVEASIENEKET. Positions 248–263 are enriched in polar residues; that stretch reads SPNGSGSTSSLNQHNQ. 2 stretches are compositionally biased toward basic and acidic residues: residues 354 to 364 and 372 to 384; these read NEERSVTEDKN and KNLDAQASKDEAS. Residues 934–953 are compositionally biased toward polar residues; that stretch reads SDSSDSGNVIKANSLTSPSY.

The protein belongs to the 4E-T/EIF4E-T family. As to quaternary structure, interacts (via YXXXXLphi motif) with eIF4E1. Interacts with DDX6/me31B. As to expression, expressed in all larval and adult organs and tissues, with highest levels in the ovary.

It localises to the cytoplasm. It is found in the P-body. The protein localises to the nucleus. In terms of biological role, eIF4E1-binding protein that regulates translation and stability of mRNAs in processing bodies (P-bodies). Probably plays a role in P-bodies to coordinate the storage of translationally inactive mRNAs in the cytoplasm and prevent their degradation. Acts as a binding platform for multiple RNA-binding proteins. Required for the formation of P-bodies. This chain is Eukaryotic translation initiation factor 4E transporter, found in Drosophila melanogaster (Fruit fly).